Here is a 252-residue protein sequence, read N- to C-terminus: MIVKTEEELQALKEIGYICAKVRNTMQAATKPGITTKELDNIAKELFEEYGAISAPIHDENFPGQTCISVNEEVAHGIPSKRVIREGDLVNIDVSALKNGYYADTGISFVVGESDDPMKQKVCDVATMAFENAIAKVKPGTKLSNIGKAVHNTARQNDLKVIKNLTGHGVGLSLHEAPAHVLNYFDPKDKTLLTEGMVLAIEPFISSNASFVTEGKNEWAFETSDKSFVAQIEHTVIVTKDGPILTTKIEEE.

A substrate-binding site is contributed by His-76. 3 residues coordinate a divalent metal cation: Asp-93, Asp-104, and His-168. His-175 serves as a coordination point for substrate. Glu-202 and Glu-233 together coordinate a divalent metal cation.

It belongs to the peptidase M24A family. Methionine aminopeptidase type 1 subfamily. As to quaternary structure, monomer. The cofactor is Co(2+). Requires Zn(2+) as cofactor. Mn(2+) serves as cofactor. Fe(2+) is required as a cofactor.

The catalysed reaction is Release of N-terminal amino acids, preferentially methionine, from peptides and arylamides.. Its function is as follows. Removes the N-terminal methionine from nascent proteins. The N-terminal methionine is often cleaved when the second residue in the primary sequence is small and uncharged (Met-Ala-, Cys, Gly, Pro, Ser, Thr, or Val). Requires deformylation of the N(alpha)-formylated initiator methionine before it can be hydrolyzed. This chain is Methionine aminopeptidase, found in Staphylococcus aureus (strain MRSA252).